The sequence spans 111 residues: Large ribosomal subunit protein P2 (111 aa).

The disordered stretch occupies residues 62 to 111 (LASVPSGGAGGAAAAGGAAAAGGAAEAAPEEAKEEEKEESDDDMGFGLFD). Positions 76-88 (AGGAAAAGGAAEA) are enriched in low complexity. Residue S101 is modified to Phosphoserine.

The protein belongs to the eukaryotic ribosomal protein P1/P2 family. In terms of assembly, P1 and P2 exist as dimers at the large ribosomal subunit.

Functionally, plays an important role in the elongation step of protein synthesis. This Podospora anserina (Pleurage anserina) protein is Large ribosomal subunit protein P2.